The primary structure comprises 361 residues: Transmembrane protein 116 (361 aa).

7 consecutive transmembrane segments (helical) span residues 29 to 49 (WIQM…ILYA), 64 to 84 (FLLS…GLLF), 103 to 123 (TLYM…YTGL), 147 to 167 (LGPV…FVAG), 210 to 230 (CMAI…IFMG), 261 to 281 (MVLY…LATM), and 295 to 315 (VALY…NCLV).

The protein localises to the membrane. This Danio rerio (Zebrafish) protein is Transmembrane protein 116 (tmem116).